The chain runs to 124 residues: MAVSLSASARRRTAKLRRHVRVRKKVSGTPIRPRLVVTRSSRHIYAQVIDDVAGHTLASASTLEDGLRASDGDKSAKAREVGRLVAERARAAGIDAVVFDRGGRTYHGRIAALADAAREGGLNF.

This sequence belongs to the universal ribosomal protein uL18 family. Part of the 50S ribosomal subunit; part of the 5S rRNA/L5/L18/L25 subcomplex. Contacts the 5S and 23S rRNAs.

Its function is as follows. This is one of the proteins that bind and probably mediate the attachment of the 5S RNA into the large ribosomal subunit, where it forms part of the central protuberance. This chain is Large ribosomal subunit protein uL18, found in Parafrankia sp. (strain EAN1pec).